The sequence spans 118 residues: Holo-[acyl-carrier-protein] synthase (118 aa).

Mg(2+) contacts are provided by D8 and E58.

It belongs to the P-Pant transferase superfamily. AcpS family. It depends on Mg(2+) as a cofactor.

Its subcellular location is the cytoplasm. It catalyses the reaction apo-[ACP] + CoA = holo-[ACP] + adenosine 3',5'-bisphosphate + H(+). Functionally, transfers the 4'-phosphopantetheine moiety from coenzyme A to a Ser of acyl-carrier-protein. The protein is Holo-[acyl-carrier-protein] synthase of Streptococcus equi subsp. zooepidemicus (strain H70).